The chain runs to 446 residues: MSNRKYFGTDGIRGKVGESPITPDFVLKLGWAAGKVLARHGSRKIIIGKDTRISGYMLESALEAGLAAAGLSALFTGPMPTPAVAYLTRTFRAEAGIVISASHNPFYDNGIKFFSIDGTKLPDDVEEAIEAEMEKPLTCVESAELGKANRIVDAAGRYIEFCKGTFPSELSLNELKIVVDCANGATYHIAPSVLRELGATVITIGCEPDGMNINEECGATDVRLLQERVLAEGAHVGLAFDGDGDRLMMVDHLGNKVDGDQILYIIAREGLRQGQLKGGAVGTLMSNMGLQLALKDLGIPFVRAKVGDRYVLEAMQEKGWRIGAENSGHVILLDKTTTGDGIVAGLQVLTAMVRNHMSLHDLCSGMKLLPQILVNVRFSGEHNPLKSDEVEEVTRQVEKELGGRGRVLLRKSGTEPLIRVMVEGDAEESLIAEMANRIADAVKAAG.

Serine 102 (phosphoserine intermediate) is an active-site residue. Mg(2+) contacts are provided by serine 102, aspartate 241, aspartate 243, and aspartate 245. The residue at position 102 (serine 102) is a Phosphoserine.

This sequence belongs to the phosphohexose mutase family. It depends on Mg(2+) as a cofactor. Activated by phosphorylation.

The catalysed reaction is alpha-D-glucosamine 1-phosphate = D-glucosamine 6-phosphate. Its function is as follows. Catalyzes the conversion of glucosamine-6-phosphate to glucosamine-1-phosphate. This is Phosphoglucosamine mutase from Yersinia pseudotuberculosis serotype O:1b (strain IP 31758).